The chain runs to 211 residues: LexA repressor (211 aa).

A DNA-binding region (H-T-H motif) is located at residues 27-47 (QTEIARAFGFKGVRAVQHHLD). Active-site for autocatalytic cleavage activity residues include Ser131 and Lys168.

This sequence belongs to the peptidase S24 family. Homodimer.

It carries out the reaction Hydrolysis of Ala-|-Gly bond in repressor LexA.. In terms of biological role, represses a number of genes involved in the response to DNA damage (SOS response), including recA and lexA. In the presence of single-stranded DNA, RecA interacts with LexA causing an autocatalytic cleavage which disrupts the DNA-binding part of LexA, leading to derepression of the SOS regulon and eventually DNA repair. This chain is LexA repressor, found in Xylella fastidiosa (strain M12).